Consider the following 95-residue polypeptide: Hiracin-JM79 immunity factor (95 aa).

Imparts immunity to bacteriocin hiracin-JM79 to naturally sensitive host strains. In Enterococcus hirae, this protein is Hiracin-JM79 immunity factor.